Here is a 284-residue protein sequence, read N- to C-terminus: Diaminopimelate epimerase (284 aa).

The substrate site is built by N14 and N67. C76 serves as the catalytic Proton donor. Substrate is bound by residues G77 to N78, N166, N199, and E217 to R218. C226 (proton acceptor) is an active-site residue. G227–T228 is a binding site for substrate.

Belongs to the diaminopimelate epimerase family. As to quaternary structure, homodimer.

The protein resides in the cytoplasm. The enzyme catalyses (2S,6S)-2,6-diaminopimelate = meso-2,6-diaminopimelate. It participates in amino-acid biosynthesis; L-lysine biosynthesis via DAP pathway; DL-2,6-diaminopimelate from LL-2,6-diaminopimelate: step 1/1. Its function is as follows. Catalyzes the stereoinversion of LL-2,6-diaminopimelate (L,L-DAP) to meso-diaminopimelate (meso-DAP), a precursor of L-lysine and an essential component of the bacterial peptidoglycan. This is Diaminopimelate epimerase from Geobacillus sp. (strain WCH70).